Reading from the N-terminus, the 1966-residue chain is Histone-lysine N-methyltransferase SETD1B (1966 aa).

The segment covering 1-12 (MENSHPPHHHHQ) has biased composition (basic residues). The interval 1–26 (MENSHPPHHHHQQPPPQPGPSGERRN) is disordered. Residues 68 to 98 (VEDPRVVGIWTKNKELELSVPKFKIDEFYVG) form an interaction with WDR82 region. Residues 93 to 181 (DEFYVGPVPP…NIIHVELDTK (89 aa)) enclose the RRM domain. Disordered stretches follow at residues 235–302 (GCGS…LFSQ), 357–660 (VGGT…PKPM), 675–719 (LAPT…PPPA), 963–1462 (KVKR…SGPL), 1501–1541 (PPLL…RPPA), 1555–1606 (QPQT…KLPF), and 1636–1668 (AKSR…PQPL). Polar residues-rich tracts occupy residues 243–259 (VTPN…TAYS), 265–274 (TPNSYGQGTP), and 282–300 (PFSQ…SYLF). Composition is skewed to pro residues over residues 432–441 (PAPPPLPPAE) and 449–458 (GTPPGPPPPD). Positions 493–521 (EKPHDSLDSRIEMLLKEQRTKLLFLREPD) are enriched in basic and acidic residues. The span at 531–543 (SPISSSSSQLSPL) shows a compositional bias: low complexity. Over residues 592–603 (PRPPPEPGPPDP) the composition is skewed to pro residues. Residues 637–646 (EDMEISDDEM) show a composition bias toward acidic residues. Pro residues predominate over residues 679 to 719 (LPLPPPPGFPPLPPPPPPPPPQPGFPMPPPLPPPPPPPPPA). Phosphoserine is present on residues Ser-986 and Ser-994. The segment covering 995–1015 (ERERDRDMADTPCELAKRDPK) has biased composition (basic and acidic residues). Phosphoserine is present on Ser-1031. Positions 1041–1064 (LSASSSSSASSSSGSSTTSPSSSA) are enriched in low complexity. Acidic residues-rich tracts occupy residues 1067 to 1087 (KEEE…EEEE) and 1104 to 1142 (KDDD…EEET). Positions 1148-1174 (SKAEATSSSESSESSEFESSSESSPSS) are enriched in low complexity. A coiled-coil region spans residues 1173 to 1204 (SSSEDEEEVVAREEEEEEEEEEMVAEESMASA). 2 stretches are compositionally biased toward acidic residues: residues 1175 to 1197 (SEDE…EMVA) and 1229 to 1238 (GMEEEVDIET). Residues Ser-1265, Ser-1283, and Ser-1335 each carry the phosphoserine modification. Residues 1312–1340 (EPPMMLPLPLQPPLPPPRPPRPPSPPPEP) are compositionally biased toward pro residues. The segment covering 1383–1425 (PGGEPPLSGGSSGLSLSSPQVPGSPFSYPAPSPSLSSGGLPRT) has biased composition (low complexity). Pro residues predominate over residues 1501–1514 (PPLLPAPLASCPPP). Residues 1515 to 1524 (MKRKPGRPRR) are compositionally biased toward basic residues. Residues 1580–1600 (PAPPPPLPPQPPPPPPPPPVE) are compositionally biased toward pro residues. A phosphoserine mark is found at Ser-1659 and Ser-1663. Positions 1745 to 1750 (GCARSE) match the WDR5 interaction motif (WIN) motif. The segment at 1767–1800 (SRASTDEPPADTQGMSIPAQPHASTRAGSERRSE) is disordered. Positions 1798–1803 (RSEQRR) match the RxxxRR motif motif. The 118-residue stretch at 1827–1944 (KKLKFCKSHI…VNEEITYDYK (118 aa)) folds into the SET domain. An S-adenosyl-L-methionine-binding site is contributed by Tyr-1943. The 17-residue stretch at 1950–1966 (VKIPCLCGSENCRGTLN) folds into the Post-SET domain.

The protein belongs to the class V-like SAM-binding methyltransferase superfamily. In terms of assembly, component of the SET1B/COMPASS complex composed of the catalytic subunit SETD1B, WDR5, WDR82, RBBP5, ASH2L/ASH2, CXXC1/CFP1, HCFC1, DPY30 homotrimer and BOD1. Forms a core complex with the evolutionary conserved subcomplex WRAD composed of WDR5, RBBP5, ASH2L/ASH2 and DPY30 subunits; WRAD differentially stimulates the methyltransferase activity. Interacts with HCFC1 and ASH2L/ASH2. Interacts (via N-terminal region) with WDR82. Interacts (via the RRM domain) with hyperphosphorylated C-terminal domain (CTD) of RNA polymerase II large subunit (POLR2A) only in the presence of WDR82. Binds specifically to CTD heptad repeats phosphorylated on 'Ser-5' of each heptad. Interacts with RBM15. Interacts (via WIN motif) with WDR5.

It localises to the nucleus. The protein localises to the nucleus speckle. Its subcellular location is the chromosome. The protein resides in the cytoplasm. It catalyses the reaction L-lysyl(4)-[histone H3] + S-adenosyl-L-methionine = N(6)-methyl-L-lysyl(4)-[histone H3] + S-adenosyl-L-homocysteine + H(+). The catalysed reaction is N(6)-methyl-L-lysyl(4)-[histone H3] + S-adenosyl-L-methionine = N(6),N(6)-dimethyl-L-lysyl(4)-[histone H3] + S-adenosyl-L-homocysteine + H(+). The enzyme catalyses N(6),N(6)-dimethyl-L-lysyl(4)-[histone H3] + S-adenosyl-L-methionine = N(6),N(6),N(6)-trimethyl-L-lysyl(4)-[histone H3] + S-adenosyl-L-homocysteine + H(+). In terms of biological role, histone methyltransferase that catalyzes methyl group transfer from S-adenosyl-L-methionine to the epsilon-amino group of 'Lys-4' of histone H3 (H3K4) via a non-processive mechanism. Part of chromatin remodeling machinery, forms H3K4me1, H3K4me2 and H3K4me3 methylation marks at active chromatin sites where transcription and DNA repair take place. Plays an essential role in regulating the transcriptional programming of multipotent hematopoietic progenitor cells and lymphoid lineage specification during hematopoiesis. In Homo sapiens (Human), this protein is Histone-lysine N-methyltransferase SETD1B (SETD1B).